The following is a 347-amino-acid chain: NADH-quinone oxidoreductase subunit H (347 aa).

The next 9 membrane-spanning stretches (helical) occupy residues L13–L33, P50–F70, G82–I102, V115–G135, I161–V181, F198–L218, F248–V268, V286–V306, and V325–G345.

Belongs to the complex I subunit 1 family. NDH-1 is composed of 14 different subunits. Subunits NuoA, H, J, K, L, M, N constitute the membrane sector of the complex.

Its subcellular location is the cell inner membrane. It catalyses the reaction a quinone + NADH + 5 H(+)(in) = a quinol + NAD(+) + 4 H(+)(out). Its function is as follows. NDH-1 shuttles electrons from NADH, via FMN and iron-sulfur (Fe-S) centers, to quinones in the respiratory chain. The immediate electron acceptor for the enzyme in this species is believed to be ubiquinone. Couples the redox reaction to proton translocation (for every two electrons transferred, four hydrogen ions are translocated across the cytoplasmic membrane), and thus conserves the redox energy in a proton gradient. This subunit may bind ubiquinone. The polypeptide is NADH-quinone oxidoreductase subunit H (Brucella ovis (strain ATCC 25840 / 63/290 / NCTC 10512)).